We begin with the raw amino-acid sequence, 62 residues long: Negative regulatory protein YxlE (62 aa).

A run of 2 helical transmembrane segments spans residues 7 to 27 (MILPLIVLQLALAVFALISCI) and 37 to 57 (WMWAAIIVCINIIGPILFFTV).

It is found in the cell membrane. Together with YxlD is important for negative regulation of sigma Y activity. The sequence is that of Negative regulatory protein YxlE (yxlE) from Bacillus subtilis (strain 168).